Here is an 892-residue protein sequence, read N- to C-terminus: Alanine--tRNA ligase (892 aa).

Zn(2+) contacts are provided by His574, His578, Cys676, and His680.

The protein belongs to the class-II aminoacyl-tRNA synthetase family. Zn(2+) serves as cofactor.

It is found in the cytoplasm. It catalyses the reaction tRNA(Ala) + L-alanine + ATP = L-alanyl-tRNA(Ala) + AMP + diphosphate. Functionally, catalyzes the attachment of alanine to tRNA(Ala) in a two-step reaction: alanine is first activated by ATP to form Ala-AMP and then transferred to the acceptor end of tRNA(Ala). Also edits incorrectly charged Ser-tRNA(Ala) and Gly-tRNA(Ala) via its editing domain. The chain is Alanine--tRNA ligase from Prochlorococcus marinus (strain MIT 9313).